The primary structure comprises 939 residues: Translation initiation factor IF-2 (939 aa).

Positions 48–355 are disordered; that stretch reads KFAPAPKVEN…KPEKKEKEEE (308 aa). Low complexity predominate over residues 79–93; it reads QQNQAPKQPQQGTQN. The segment covering 114–130 has biased composition (basic and acidic residues); that stretch reads SRDKNSRRDNNNRDGQR. A compositionally biased stretch (low complexity) spans 131–257; sequence DNNGGYRNND…NNDRNNNGGF (127 aa). The span at 287–355 shows a compositional bias: basic and acidic residues; it reads RNNDRRDSAP…KPEKKEKEEE (69 aa). The 170-residue stretch at 440-609 folds into the tr-type G domain; the sequence is PRPPVVCVMG…LLTAEVNELK (170 aa). Residues 449–456 are G1; it reads GHVDHGKT. 449-456 lines the GTP pocket; the sequence is GHVDHGKT. A G2 region spans residues 474 to 478; sequence GITQK. Positions 495–498 are G3; it reads DTPG. GTP is bound by residues 495-499 and 549-552; these read DTPGH and NKID. The segment at 549 to 552 is G4; it reads NKID. The tract at residues 585 to 587 is G5; sequence SAH.

The protein belongs to the TRAFAC class translation factor GTPase superfamily. Classic translation factor GTPase family. IF-2 subfamily.

The protein resides in the cytoplasm. One of the essential components for the initiation of protein synthesis. Protects formylmethionyl-tRNA from spontaneous hydrolysis and promotes its binding to the 30S ribosomal subunits. Also involved in the hydrolysis of GTP during the formation of the 70S ribosomal complex. In Lachnospira eligens (strain ATCC 27750 / DSM 3376 / VPI C15-48 / C15-B4) (Eubacterium eligens), this protein is Translation initiation factor IF-2.